The primary structure comprises 209 residues: Kynurenine formamidase (209 aa).

Position 18 (phenylalanine 18) interacts with substrate. Histidine 48, histidine 52, and aspartate 54 together coordinate Zn(2+). Histidine 58 acts as the Proton donor/acceptor in catalysis. Positions 160 and 172 each coordinate Zn(2+).

This sequence belongs to the Cyclase 1 superfamily. KynB family. As to quaternary structure, homodimer. Zn(2+) is required as a cofactor.

It catalyses the reaction N-formyl-L-kynurenine + H2O = L-kynurenine + formate + H(+). The protein operates within amino-acid degradation; L-tryptophan degradation via kynurenine pathway; L-kynurenine from L-tryptophan: step 2/2. In terms of biological role, catalyzes the hydrolysis of N-formyl-L-kynurenine to L-kynurenine, the second step in the kynurenine pathway of tryptophan degradation. This chain is Kynurenine formamidase, found in Bordetella avium (strain 197N).